The following is an 87-amino-acid chain: MARSLKKGPFVDENLFKKAEVAKDGEVIKTWSRRSTIFPEFIGKTFGVYNGKEFIPVYVTEDMVGHKLGEFAPTRKFGGHGDDKGKK.

It belongs to the universal ribosomal protein uS19 family.

Its function is as follows. Protein S19 forms a complex with S13 that binds strongly to the 16S ribosomal RNA. In Mesoplasma florum (strain ATCC 33453 / NBRC 100688 / NCTC 11704 / L1) (Acholeplasma florum), this protein is Small ribosomal subunit protein uS19.